The primary structure comprises 396 residues: Elongation factor Tu (396 aa).

The 197-residue stretch at 10–206 (KPHCNIGTIG…NVDEYIPQPE (197 aa)) folds into the tr-type G domain. The segment at 19 to 26 (GHVDHGKT) is G1. GTP is bound at residue 19 to 26 (GHVDHGKT). T26 lines the Mg(2+) pocket. Positions 60–64 (GITIS) are G2. The segment at 81–84 (DCPG) is G3. Residues 81–85 (DCPGH) and 136–139 (NKCD) contribute to the GTP site. The G4 stretch occupies residues 136-139 (NKCD). The segment at 174-176 (SAL) is G5.

This sequence belongs to the TRAFAC class translation factor GTPase superfamily. Classic translation factor GTPase family. EF-Tu/EF-1A subfamily. As to quaternary structure, monomer.

The protein localises to the cytoplasm. The enzyme catalyses GTP + H2O = GDP + phosphate + H(+). Functionally, GTP hydrolase that promotes the GTP-dependent binding of aminoacyl-tRNA to the A-site of ribosomes during protein biosynthesis. In Afipia carboxidovorans (strain ATCC 49405 / DSM 1227 / KCTC 32145 / OM5) (Oligotropha carboxidovorans), this protein is Elongation factor Tu.